Here is a 201-residue protein sequence, read N- to C-terminus: dTTP/UTP pyrophosphatase (201 aa).

Aspartate 75 functions as the Proton acceptor in the catalytic mechanism.

The protein belongs to the Maf family. YhdE subfamily. The cofactor is a divalent metal cation.

It localises to the cytoplasm. It catalyses the reaction dTTP + H2O = dTMP + diphosphate + H(+). It carries out the reaction UTP + H2O = UMP + diphosphate + H(+). In terms of biological role, nucleoside triphosphate pyrophosphatase that hydrolyzes dTTP and UTP. May have a dual role in cell division arrest and in preventing the incorporation of modified nucleotides into cellular nucleic acids. The sequence is that of dTTP/UTP pyrophosphatase from Pseudomonas fluorescens (strain ATCC BAA-477 / NRRL B-23932 / Pf-5).